Reading from the N-terminus, the 320-residue chain is Aldose reductase (320 aa).

Y60 (proton donor) is an active-site residue. Residue H121 coordinates substrate. 215–269 is an NADP(+) binding site; it reads SPLGSSEKNLAHDPVVEKVANKLNKTPGQVLIKWALQRGTSVIPKSSKDERIKEN.

The protein belongs to the aldo/keto reductase family.

The enzyme catalyses an alditol + NAD(+) = an aldose + NADH + H(+). It catalyses the reaction an alditol + NADP(+) = an aldose + NADPH + H(+). The protein is Aldose reductase of Hordeum vulgare (Barley).